The chain runs to 114 residues: Flagellar hook-basal body complex protein FliE (114 aa).

Belongs to the FliE family.

Its subcellular location is the bacterial flagellum basal body. The sequence is that of Flagellar hook-basal body complex protein FliE from Burkholderia multivorans (strain ATCC 17616 / 249).